We begin with the raw amino-acid sequence, 330 residues long: DNA-directed RNA polymerase subunit alpha (330 aa).

The alpha N-terminal domain (alpha-NTD) stretch occupies residues 1–235 (MQGSVTEFLK…EQLEAFVDLR (235 aa)). An alpha C-terminal domain (alpha-CTD) region spans residues 249–330 (FDPILLRPVD…WPPASIADNE (82 aa)).

Belongs to the RNA polymerase alpha chain family. In terms of assembly, homodimer. The RNAP catalytic core consists of 2 alpha, 1 beta, 1 beta' and 1 omega subunit. When a sigma factor is associated with the core the holoenzyme is formed, which can initiate transcription.

The catalysed reaction is RNA(n) + a ribonucleoside 5'-triphosphate = RNA(n+1) + diphosphate. Functionally, DNA-dependent RNA polymerase catalyzes the transcription of DNA into RNA using the four ribonucleoside triphosphates as substrates. The polypeptide is DNA-directed RNA polymerase subunit alpha (Yersinia enterocolitica serotype O:8 / biotype 1B (strain NCTC 13174 / 8081)).